Consider the following 783-residue polypeptide: Cadherin-5 (783 aa).

An N-terminal signal peptide occupies residues 1-25 (MQALVMLLATGATYYLGLLAAAAAA). Positions 26-45 (VNPGRPNTPGSLPAHRRQKR) are excised as a propeptide. Cadherin domains lie at 44-149 (KRDW…WPVF), 150-256 (THRV…FPIF), 257-371 (TQNR…PPIF), 372-478 (QQPF…APEF), and 478-585 (FAKP…GEFT). Over 46 to 599 (DWIWNQMHID…AAAQVGISIQ (554 aa)) the chain is Extracellular. The Ca(2+) site is built by glutamate 56 and glutamate 57. A glycan (N-linked (GlcNAc...) asparagine) is linked at asparagine 59. 7 residues coordinate Ca(2+): aspartate 107, glutamate 109, aspartate 141, valine 142, asparagine 143, aspartate 144, and asparagine 145. Residue asparagine 155 is glycosylated (N-linked (GlcNAc...) asparagine). Ca(2+) is bound by residues aspartate 175, aspartate 177, histidine 184, and aspartate 229. N-linked (GlcNAc...) asparagine glycans are attached at residues asparagine 361, asparagine 441, and asparagine 523. The helical transmembrane segment at 600–620 (ALVAIFLCILTFTVITLLIIL) threads the bilayer. Positions 621-660 (RRRLRKQARAHGKSVPEIHEQLVTYDEEGGGEMDTTSYDV) are required for interaction with PALS1. The Cytoplasmic segment spans residues 621–783 (RRRLRKQARA…GSDPQEELVY (163 aa)).

As to quaternary structure, part of a complex composed of AMOTL2, MAGI1 and CDH5, within the complex AMOTL2 acts as a scaffold protein for the interaction of MAGI1 with CDH5. The complex is required for coupling actin fibers to cell junctions in endothelial cells. Within the complex AMOTL2 (via its N-terminus) interacts with CDH5. Interacts (via cadherin 5 domain) with PTPRB. Interacts with TRPC4. Interacts with KRIT1. Interacts with PARD3. Interacts with RTN4 (isoform B). Interacts with PALS1; the interaction promotes PALS1 localization to cell junctions and is required for CDH5-mediated vascular lumen formation and endothelial cell. Interacts with CTNND1/p120-catenin; the interaction controls CADH5 endocytosis. Post-translationally, phosphorylated on tyrosine residues by KDR/VEGFR-2. Dephosphorylated by PTPRB. In terms of processing, O-glycosylated.

The protein localises to the cell junction. It is found in the adherens junction. Its subcellular location is the cell membrane. The protein resides in the cytoplasm. Functionally, cadherins are calcium-dependent cell adhesion proteins. They preferentially interact with themselves in a homophilic manner in connecting cells; cadherins may thus contribute to the sorting of heterogeneous cell types. This cadherin may play a important role in endothelial cell biology through control of the cohesion and organization of the intercellular junctions. It associates with alpha-catenin forming a link to the cytoskeleton. Plays a role in coupling actin fibers to cell junctions in endothelial cells, via acting as a cell junctional complex anchor for AMOTL2 and MAGI1. Acts in concert with KRIT1 and PALS1 to establish and maintain correct endothelial cell polarity and vascular lumen. These effects are mediated by recruitment and activation of the Par polarity complex and RAP1B. Required for activation of PRKCZ and for localization of phosphorylated PRKCZ, PARD3, TIAM1 and RAP1B to the cell junction. Associates with CTNND1/p120-catenin to control CADH5 endocytosis. The sequence is that of Cadherin-5 from Bos taurus (Bovine).